The following is a 419-amino-acid chain: uncharacterized protein (419 aa).

The next 12 membrane-spanning stretches (helical) occupy residues 15–35, 36–56, 77–99, 104–126, 140–160, 166–186, 213–233, 246–266, 282–302, 309–329, 351–371, and 377–397; these read RVLMINQFGINIGFYMLMPYL, ADYLAGPLGLAAWAVGLVMGV, YKPLIIAGCLIRTGGFALLVVAQ, VLIAAAATGFAGALFNPAVRGYL, MFNVFYQSGILLGPLVGLVLL, ITVLAAAGVFGLLTVAQLVAL, FLTLAAAMTGCYALSFQIYLA, QYLLIAAMFAVSGLVAVGGQL, LVVGATILAASFIPVAVIPNG, VAVMALVLSASLLAVASAALF, FYSTIVGVGVLVGNLAIGSLM, and LNTDEIVWGGLILVGIVAVAG.

Belongs to the major facilitator superfamily.

The protein resides in the cell membrane. This is an uncharacterized protein from Mycobacterium tuberculosis (strain CDC 1551 / Oshkosh).